A 79-amino-acid chain; its full sequence is MORN repeat-containing protein 2 (79 aa).

MORN repeat units follow at residues 15–37 (YEGH…NGAK) and 38–60 (YTGN…QGLE).

The chain is MORN repeat-containing protein 2 (MORN2) from Bos taurus (Bovine).